A 273-amino-acid polypeptide reads, in one-letter code: NLP effector protein 10 (273 aa).

The signal sequence occupies residues 1–21; it reads MKLPTFLIGFVALLVTSNGSA. The N-linked (GlcNAc...) asparagine glycan is linked to asparagine 91. Residues 129-139 carry the Conserved undecapeptide motif motif; the sequence is AIMYAWYLPRA. Positions 149–155 match the Conserved heptapeptide motif motif; the sequence is GHRHYWL.

This sequence belongs to the Necrosis inducing protein (NPP1) family.

Its subcellular location is the secreted. Functionally, secreted effector that acts as a pathogen-associated molecular pattern (PAMP) recognized by the plant immune system. Seems not to induce necrosis in Nicotiana benthamiana leaves but significantly improves disease resistance of Arabidopsis thaliana to Hyaloperonospora arabidopsidis and causes an inhibition of plant growth which is typically associated with enhanced immunity when over-expressed in Arabidopsis. The chain is NLP effector protein 10 from Plasmopara viticola (Downy mildew of grapevine).